The following is a 191-amino-acid chain: Fe/S biogenesis protein NfuA (191 aa).

2 residues coordinate [4Fe-4S] cluster: cysteine 149 and cysteine 152.

The protein belongs to the NfuA family. As to quaternary structure, homodimer. It depends on [4Fe-4S] cluster as a cofactor.

Its function is as follows. Involved in iron-sulfur cluster biogenesis. Binds a 4Fe-4S cluster, can transfer this cluster to apoproteins, and thereby intervenes in the maturation of Fe/S proteins. Could also act as a scaffold/chaperone for damaged Fe/S proteins. The protein is Fe/S biogenesis protein NfuA of Klebsiella pneumoniae (strain 342).